A 355-amino-acid polypeptide reads, in one-letter code: Methionine import ATP-binding protein MetN (355 aa).

The region spanning 8–250 is the ABC transporter domain; sequence LKNIDITFTQ…PQEDLTQEFI (243 aa). Position 42–49 (42–49) interacts with ATP; that stretch reads GYSGAGKS.

The protein belongs to the ABC transporter superfamily. Methionine importer (TC 3.A.1.24) family. The complex is composed of two ATP-binding proteins (MetN), two transmembrane proteins (MetI) and a solute-binding protein (MetQ).

The protein resides in the cell membrane. The catalysed reaction is L-methionine(out) + ATP + H2O = L-methionine(in) + ADP + phosphate + H(+). It carries out the reaction D-methionine(out) + ATP + H2O = D-methionine(in) + ADP + phosphate + H(+). In terms of biological role, part of the ABC transporter complex MetNIQ involved in methionine import. Responsible for energy coupling to the transport system. The sequence is that of Methionine import ATP-binding protein MetN from Streptococcus thermophilus (strain ATCC BAA-250 / LMG 18311).